A 119-amino-acid polypeptide reads, in one-letter code: Large ribosomal subunit protein bL20 (119 aa).

It belongs to the bacterial ribosomal protein bL20 family.

Its function is as follows. Binds directly to 23S ribosomal RNA and is necessary for the in vitro assembly process of the 50S ribosomal subunit. It is not involved in the protein synthesizing functions of that subunit. The protein is Large ribosomal subunit protein bL20 of Laribacter hongkongensis (strain HLHK9).